Here is a 403-residue protein sequence, read N- to C-terminus: S-arrestin (403 aa).

The residue at position 231 (Thr231) is a Phosphothreonine. The interval 381 to 403 (RQNLKDTGENTEGKKDEDAGQDE) is disordered.

Belongs to the arrestin family. Monomer. Homodimer. Homotetramer. Interacts with RHO (via the phosphorylated C-terminus). As to expression, retina and pineal gland.

The protein resides in the cell projection. It localises to the cilium. The protein localises to the photoreceptor outer segment. It is found in the membrane. Binds to photoactivated, phosphorylated RHO and terminates RHO signaling via G-proteins by competing with G-proteins for the same binding site on RHO. May play a role in preventing light-dependent degeneration of retinal photoreceptor cells. In Rattus norvegicus (Rat), this protein is S-arrestin (Sag).